The following is a 1230-amino-acid chain: Formin-like protein 14 (1230 aa).

The Phosphatase tensin-type domain occupies 1–194 (MSLLSRFFYK…QYVARRNINS (194 aa)). C127 acts as the Phosphocysteine intermediate in catalysis. A C2 tensin-type domain is found at 200–339 (ERALSLDCVI…FRAEVLFGEV (140 aa)). Disordered regions lie at residues 412-432 (FNSP…SSDE), 460-822 (HESS…LKPL), and 1187-1230 (ENEK…RHRT). Over residues 484–496 (DNPLNLPSDPPSS) the composition is skewed to low complexity. 4 stretches are compositionally biased toward pro residues: residues 503 to 514 (LPPPPPPPPPPL), 524 to 535 (SQPPPPPPPPPL), 545 to 556 (SQPPPPPPPPPL), and 566 to 575 (SQPPPPPPLP). Polar residues predominate over residues 579–591 (NRDPLTTLHQPIN). Composition is skewed to pro residues over residues 592-630 (KTPP…PPPS), 637-649 (PSAP…PPPS), 660-672 (QPPP…PPTR), 679-688 (APPPPPPPPT), 699-711 (PSTP…PPPK), 718-728 (PKPPAPPPLPP), and 735-766 (APPP…PPPG). An FH2 domain is found at 809–1207 (VPTAAPKKTA…KLEKEAIKEK (399 aa)). A compositionally biased stretch (basic and acidic residues) spans 1187–1215 (ENEKQAEAEKKKLEKEAIKEKSATKKDGV).

The protein belongs to the formin-like family. Class-II subfamily.

This chain is Formin-like protein 14 (FH14), found in Arabidopsis thaliana (Mouse-ear cress).